A 328-amino-acid polypeptide reads, in one-letter code: NSNEFGNFIAIDDELKLPEDQPEPMTLEHTEPMHSDPLEMEEVEMEDIEGEMILDIDSCDANNSLAVVEYIEDLHAYYRKIEYLGCVSPTYMDEQLDLNERMRAILVDWLIEVHDKFDLMQETLFLTVNLIDRFLAKQNVVRKKLQLVGLVAMLLACKYEEVSVPVVSDLIHIADRAYTRKDILEMEKLMLNTLQYNMSLPTAYVFMRRFLKAAQADKKLELVAFFLVDLSLVEYEMLKFPPSLVAAAAVYTAQCTVSGFKHWNKTCEWHTNYSEDQLLECSMLMVGFHQKAGAGKLTGVHRKYGSAKFSFTAKCEPACFLLENKNQP.

Belongs to the cyclin family. Cyclin AB subfamily. In terms of assembly, interacts with the CDC2 protein kinase to form a serine/threonine kinase holoenzyme complex also known as maturation promoting factor (MPF). The cyclin subunit imparts substrate specificity to the complex. Only expressed in organs with dividing cells.

Functionally, essential for the control of the cell cycle at the G2/M (mitosis) transition. In Medicago sativa (Alfalfa), this protein is G2/mitotic-specific cyclin-2.